The chain runs to 92 residues: Large ribosomal subunit protein bL27 (92 aa).

Residues 1-9 (MLVMNLQYF) constitute a propeptide that is removed on maturation.

This sequence belongs to the bacterial ribosomal protein bL27 family. Post-translationally, the N-terminus is cleaved by ribosomal processing cysteine protease Prp.

In Heliobacterium modesticaldum (strain ATCC 51547 / Ice1), this protein is Large ribosomal subunit protein bL27.